A 358-amino-acid polypeptide reads, in one-letter code: Tripartite motif-containing protein 54 (358 aa).

Residues 26–82 form an RING-type zinc finger; sequence CPICLEMFSKPVVILPCQHNLCRKCANDVFQASNPLWQSRGSTTVSSGGRFRCPSCR. The B box-type zinc-finger motif lies at 121-163; that stretch reads EQHLMCEEHEEEKINIYCLSCEVPTCSLCKVFGAHKDCEVAPL. C126, H129, C149, and H155 together coordinate Zn(2+). The mediates microtubule-binding and homooligomerization stretch occupies residues 168–211; the sequence is KRQKSELSDGIAMLVAGNDRVQAVITQMEEVCQTIEDNSRRQKQ. Residues 220–258 adopt a coiled-coil conformation; that stretch reads LCAVLEERKGELLQALAREQEEKLQRVRGLIRQYGDHLE. The region spanning 271–329 is the COS domain; that stretch reads MEEPQMALYLQQAKELINKVGAMSKVELAGRPEPGYESMEQFTVRVEHVAEMLRTIDFQ. The interval 326 to 358 is disordered; sequence IDFQPGASGEEEEVAPDGEEGSAGPEEERPDGP. Over residues 334–345 the composition is skewed to acidic residues; it reads GEEEEVAPDGEE.

In terms of assembly, homooligomer and heterooligomer. Interacts with tubulin. Interacts with TRIM63 and probably with TRIM55. In terms of tissue distribution, specifically expressed in heart and skeletal muscle.

The protein resides in the cytoplasm. It localises to the cytoskeleton. It is found in the myofibril. Its subcellular location is the sarcomere. The protein localises to the z line. Its function is as follows. May bind and stabilize microtubules during myotubes formation. The sequence is that of Tripartite motif-containing protein 54 (TRIM54) from Homo sapiens (Human).